The sequence spans 1127 residues: DNA-directed RNA polymerase I subunit RPA2 homolog (1127 aa).

Ser1025 carries the phosphoserine modification.

This sequence belongs to the RNA polymerase beta chain family. Component of the RNA polymerase I (Pol I) complex consisting of at least 13 subunits.

Its subcellular location is the nucleus. It is found in the nucleolus. It carries out the reaction RNA(n) + a ribonucleoside 5'-triphosphate = RNA(n+1) + diphosphate. With respect to regulation, antisense ribosomal siRNAs silence rRNA expression during the elongation phase by decreasing rpoa-2 occupancy downstream of the RNAi-targeted region in nrde-2-dependent manner. Its function is as follows. DNA-dependent RNA polymerase catalyzes the transcription of DNA into RNA using the four ribonucleoside triphosphates as substrates. Second largest core component of RNA polymerase I which synthesizes ribosomal RNA precursors. Proposed to contribute to the polymerase catalytic activity and forms the polymerase active center together with the largest subunit. Pol I is composed of mobile elements and RPA2 is part of the core element with the central large cleft and probably a clamp element that moves to open and close the cleft. Specifically binds to 18S, 5.8S and 26S rDNA, but not to 5S rDNA. The polypeptide is DNA-directed RNA polymerase I subunit RPA2 homolog (Caenorhabditis elegans).